Here is a 95-residue protein sequence, read N- to C-terminus: MKIEVIKRDKNLLEFYLVGEDHTFANLLSETLHENKHVTFAAYTIEHPVLMARKPRFRISTDGKITPEKALEEAAQKIFDRAKDVLEVWEGVIKK.

Belongs to the archaeal Rpo11/eukaryotic RPB11/RPC19 RNA polymerase subunit family. As to quaternary structure, part of the RNA polymerase complex.

Its subcellular location is the cytoplasm. The catalysed reaction is RNA(n) + a ribonucleoside 5'-triphosphate = RNA(n+1) + diphosphate. Its function is as follows. DNA-dependent RNA polymerase (RNAP) catalyzes the transcription of DNA into RNA using the four ribonucleoside triphosphates as substrates. This Thermococcus sibiricus (strain DSM 12597 / MM 739) protein is DNA-directed RNA polymerase subunit Rpo11.